Consider the following 331-residue polypeptide: MTIAVLGGAGYIGSHTVKQLLAAGEDVVVLDNLITGHRKAVDPRARFYQGDIRDYHFLSQVFSQEKIDGIVHFAAFSIVPESMKDPLKYFDNNTGGMITLLEAMNQFGIKKIVFSSTAATYGEPKQVPIKETDPQVPTNPYGESKLAMEKIMHWADVAYGLKFVALRYFNVAGAMPDGSIGEDHHPETHIVPIILQVAAGTRTGLQIYGDDYPTKDGTNVRDYVHVVDLADAHILALKYLDAGNKSSAFNIGSAHGFSNLEILNAARKVTGQEIPATMGPRRAGDPSTLIASSEKARDILGWKPNYDDIDKIIETAWNWHENHPEGFGDRN.

NAD(+) is bound by residues 11–12 (YI), 31–36 (DNLITG), 51–52 (DI), 73–77 (FAAFS), asparagine 92, threonine 117, tyrosine 141, lysine 145, and phenylalanine 169. Substrate is bound by residues threonine 117 and tyrosine 141. Tyrosine 141 (proton acceptor) is an active-site residue. Residues asparagine 170, 189–190 (HI), 206–208 (QIY), arginine 221, and 282–285 (RAGD) contribute to the substrate site.

This sequence belongs to the NAD(P)-dependent epimerase/dehydratase family. In terms of assembly, homodimer. The cofactor is NAD(+).

The enzyme catalyses UDP-alpha-D-glucose = UDP-alpha-D-galactose. It participates in carbohydrate metabolism; galactose metabolism. The chain is UDP-glucose 4-epimerase (galE) from Lacticaseibacillus casei (Lactobacillus casei).